The sequence spans 681 residues: Chaperone protein htpG (681 aa).

The interval methionine 1–arginine 326 is a; substrate-binding. The tract at residues serine 327–asparagine 545 is b. The interval isoleucine 546–isoleucine 681 is c. Residues aspartate 601–lysine 620 are disordered.

This sequence belongs to the heat shock protein 90 family. As to quaternary structure, homodimer.

The protein localises to the cytoplasm. Functionally, molecular chaperone. Has ATPase activity. This is Chaperone protein htpG from Bacteroides fragilis (strain 638R).